We begin with the raw amino-acid sequence, 674 residues long: Polyunsaturated fatty acid 5-lipoxygenase (674 aa).

The 117-residue stretch at 2–118 (PSYTVTVATG…EVVLRDGRAK (117 aa)) folds into the PLAT domain. Residues Gly-17, Thr-18, Asp-19, Asn-44, Asp-45, Glu-47, Asp-79, and Asp-80 each coordinate Ca(2+). Residues 119–674 (LARDDQIHIL…PDRIPNSVAI (556 aa)) enclose the Lipoxygenase domain. Position 272 is a phosphoserine; by MAPKAPK2 (Ser-272). 2 residues coordinate Fe cation: His-368 and His-373. The residue at position 524 (Ser-524) is a Phosphoserine; by PKA. The Fe cation site is built by His-551, Asn-555, and Ile-674.

The protein belongs to the lipoxygenase family. In terms of assembly, homodimer. Interacts with ALOX5AP and LTC4S. Interacts with COTL1, the interaction is required for stability and efficient catalytic activity. Interacts with PIK3R1; this interaction bridges ALOX5 with CD40 after CD40 ligation in B cells and leads to the production of reactive oxygen species (ROS). Interacts (via PLAT domain) with DICER1 (via Dicer dsRNA-binding fold domain); this interaction enhances arachidonate 5-lipoxygenase activity and modifies the miRNA precursor processing activity of DICER1. Fe cation is required as a cofactor. Post-translationally, serine phosphorylation by MAPKAPK2 is stimulated by arachidonic acid. Phosphorylation on Ser-524 by PKA has an inhibitory effect. Phosphorylation on Ser-272 prevents export from the nucleus. Phosphorylation at Ser-524 is stimulated by 8-bromo-3',5'-cyclic AMP or prostaglandin E2.

It is found in the cytoplasm. It localises to the nucleus matrix. The protein localises to the nucleus membrane. The protein resides in the perinuclear region. Its subcellular location is the cytosol. It is found in the nucleus envelope. It localises to the nucleus intermembrane space. It catalyses the reaction (5Z,8Z,11Z,14Z)-eicosatetraenoate + O2 = leukotriene A4 + H2O. The catalysed reaction is 18-HEPE + O2 = (5S)-hydroperoxy-18-hydroxy-(7E,9E,11Z,14Z,16E)-eicosapentaenoate. The enzyme catalyses (18R)-hydroxy-(5Z,8Z,11Z,14Z,16E)-eicosapentaenoate + O2 = (5S)-hydroperoxy-(18R)-hydroxy-(6E,8Z,11Z,14Z,16E)-eicosapentaenoate. It carries out the reaction (18S)-hydroxy-(5Z,8Z,11Z,14Z,16E)-eicosapentaenoate + O2 = (5S)-hydroperoxy-(18S)-hydroxy-(6E,8Z,11Z,14Z,16E)-eicosapentaenoate. It catalyses the reaction (5S)-hydroperoxy-(18S)-hydroxy-(6E,8Z,11Z,14Z,16E)-eicosapentaenoate = (5S,6S)-epoxy-(18S)-hydroxy-(7E,9E,11Z,14Z,16E)-eicosapentaenoate + H2O. The catalysed reaction is (5S)-hydroperoxy-(18R)-hydroxy-(6E,8Z,11Z,14Z,16E)-eicosapentaenoate = (5S,6S)-epoxy-(18R)-hydroxy-(7E,9E,11Z,14Z,16E)-eicosapentaenoate + H2O. The enzyme catalyses (5S)-hydroperoxy-18-hydroxy-(7E,9E,11Z,14Z,16E)-eicosapentaenoate = (5S,6S)-epoxy-18-hydroxy-(7E,9E,11Z,14Z,16E)-eicosapentaenoate + H2O. It carries out the reaction (5Z,8Z,11Z,14Z)-eicosatetraenoate + O2 = (5S)-hydroperoxy-(6E,8Z,11Z,14Z)-eicosatetraenoate. It catalyses the reaction (15S)-hydroxy-(5Z,8Z,11Z,13E)-eicosatetraenoate + O2 = (5S)-hydroperoxy-(15S)-hydroxy-(6E,8Z,11Z,13E)-eicosatetraenoate. The catalysed reaction is (5S)-hydroperoxy-(6E,8Z,11Z,14Z)-eicosatetraenoate = leukotriene A4 + H2O. The enzyme catalyses (5Z,8Z,11Z,14Z)-eicosatetraenoate + O2 = (8S)-hydroperoxy-(5Z,9E,11Z,14Z)-eicosatetraenoate. It carries out the reaction (5Z,8Z,11Z,14Z)-eicosatetraenoate + O2 = (12S)-hydroperoxy-(5Z,8Z,10E,14Z)-eicosatetraenoate. It catalyses the reaction (5Z,8Z)-eicosadienoate + O2 = (5S)-hydroperoxy-(6E,8Z)-eicosadienoate. The catalysed reaction is (12S)-hydroxy-(5Z,8Z,10E,14Z)-eicosatetraenoate + O2 = (5S)-hydroperoxy-(12S)-hydroxy-(6E,8Z,10E,14Z)-eicosatetraenoate. The enzyme catalyses (5Z,8Z,11Z,14Z,17Z)-eicosapentaenoate + O2 = 5-hydroperoxy-(6E,8Z,11Z,14Z,17Z)-eicosapentaenoate. It carries out the reaction (4Z,7Z,10Z,13Z,16Z,19Z)-docosahexaenoate + O2 = (14S)-hydroperoxy-(4Z,7Z,10Z,12E,16Z,19Z)-docosahexaenoate. It catalyses the reaction (4Z,7Z,10Z,13Z,16Z,19Z)-docosahexaenoate + O2 = (7S)-hydroperoxy-(4Z,8E,10Z,13Z,16Z,19Z)-docosahexaenoate. The catalysed reaction is (4Z,7Z,10Z,13Z,16Z,19Z)-docosahexaenoate + O2 = (17S)-hydroperoxy-(4Z,7Z,10Z,13Z,15E,19Z)-docosahexaenoate. It functions in the pathway lipid metabolism; leukotriene A4 biosynthesis. Its activity is regulated as follows. Undergoes a sequential loss of the oxygenase and pseudoperoxidase activities which is dependent on the structural characteristics of the substrate for the reaction, on oxygen concentration and on exposure to phospholipids and calcium. 15-HETE and other 15-mono-hydroxyeicosanoids exhibit the highest inhibitory potencies in their capability of suppressing 5-lipoxygenation of arachidonic acid, whereas the other HETEs, (5S,15S)-dihydroxy-(6E,8Z,11Z,13E)-eicosatetraenoic acid (5,15-diHETE) as well as octadecanoids, are modest or poor inhibitors. The formation of (5S)-hydroperoxy-(15S)-hydroxy-(6E,8Z,11Z,13E)-eicosatetraenoate is strongly stimulated by either hydroperoxypolyenoic fatty acids or arachidonic acid. Arachidonate 5-lipoxygenase and leukotriene A4 synthase activities are allosterically increased by ATP. Functionally, catalyzes the oxygenation of arachidonate ((5Z,8Z,11Z,14Z)-eicosatetraenoate) to 5-hydroperoxyeicosatetraenoate (5-HPETE) followed by the dehydration to 5,6- epoxyeicosatetraenoate (Leukotriene A4/LTA4), the first two steps in the biosynthesis of leukotrienes, which are potent mediators of inflammation. Also catalyzes the oxygenation of arachidonate into 8-hydroperoxyicosatetraenoate (8-HPETE) and 12-hydroperoxyicosatetraenoate (12-HPETE). Displays lipoxin synthase activity being able to convert (15S)-HETE into a conjugate tetraene. Although arachidonate is the preferred substrate, this enzyme can also metabolize oxidized fatty acids derived from arachidonate such as (15S)-HETE, eicosapentaenoate (EPA) such as (18R)- and (18S)-HEPE or docosahexaenoate (DHA) which lead to the formation of specialized pro-resolving mediators (SPM) lipoxin and resolvins E and D respectively, therefore it participates in anti-inflammatory responses. Oxidation of DHA directly inhibits endothelial cell proliferation and sprouting angiogenesis via peroxisome proliferator-activated receptor gamma (PPARgamma). It does not catalyze the oxygenation of linoleic acid and does not convert (5S)-HETE to lipoxin isomers. In addition to inflammatory processes, it participates in dendritic cell migration, wound healing through an antioxidant mechanism based on heme oxygenase-1 (HO-1) regulation expression, monocyte adhesion to the endothelium via ITGAM expression on monocytes. Moreover, it helps establish an adaptive humoral immunity by regulating primary resting B cells and follicular helper T cells and participates in the CD40-induced production of reactive oxygen species (ROS) after CD40 ligation in B cells through interaction with PIK3R1 that bridges ALOX5 with CD40. May also play a role in glucose homeostasis, regulation of insulin secretion and palmitic acid-induced insulin resistance via AMPK. Can regulate bone mineralization and fat cell differentiation increases in induced pluripotent stem cells. The protein is Polyunsaturated fatty acid 5-lipoxygenase of Homo sapiens (Human).